The primary structure comprises 75 residues: Conotoxin VnMKLT2-012 (75 aa).

The signal sequence occupies residues M1–A23. The propeptide occupies E24–R45. Basic and acidic residues predominate over residues A31 to R45. Residues A31–S50 are disordered. Cystine bridges form between C47-C60, C54-C65, and C59-C74.

The protein belongs to the conotoxin O1 superfamily. Expressed by the venom duct.

It is found in the secreted. This chain is Conotoxin VnMKLT2-012, found in Conus ventricosus (Mediterranean cone).